A 109-amino-acid chain; its full sequence is Cell division protein ZapA (109 aa).

Residues 21–99 (PEQQDALNQA…IEQALLEQGR (79 aa)) adopt a coiled-coil conformation.

It belongs to the ZapA family. Type 1 subfamily. In terms of assembly, homodimer. Interacts with FtsZ.

It localises to the cytoplasm. Its function is as follows. Activator of cell division through the inhibition of FtsZ GTPase activity, therefore promoting FtsZ assembly into bundles of protofilaments necessary for the formation of the division Z ring. It is recruited early at mid-cell but it is not essential for cell division. In Pectobacterium carotovorum subsp. carotovorum (strain PC1), this protein is Cell division protein ZapA.